We begin with the raw amino-acid sequence, 117 residues long: Ribonuclease P protein component (117 aa).

The protein belongs to the RnpA family. In terms of assembly, consists of a catalytic RNA component (M1 or rnpB) and a protein subunit.

The catalysed reaction is Endonucleolytic cleavage of RNA, removing 5'-extranucleotides from tRNA precursor.. Functionally, RNaseP catalyzes the removal of the 5'-leader sequence from pre-tRNA to produce the mature 5'-terminus. It can also cleave other RNA substrates such as 4.5S RNA. The protein component plays an auxiliary but essential role in vivo by binding to the 5'-leader sequence and broadening the substrate specificity of the ribozyme. The sequence is that of Ribonuclease P protein component from Desulforapulum autotrophicum (strain ATCC 43914 / DSM 3382 / VKM B-1955 / HRM2) (Desulfobacterium autotrophicum).